The primary structure comprises 959 residues: Glycine dehydrogenase (decarboxylating) (959 aa).

N6-(pyridoxal phosphate)lysine is present on K708.

The protein belongs to the GcvP family. The glycine cleavage system is composed of four proteins: P, T, L and H. It depends on pyridoxal 5'-phosphate as a cofactor.

The enzyme catalyses N(6)-[(R)-lipoyl]-L-lysyl-[glycine-cleavage complex H protein] + glycine + H(+) = N(6)-[(R)-S(8)-aminomethyldihydrolipoyl]-L-lysyl-[glycine-cleavage complex H protein] + CO2. Its function is as follows. The glycine cleavage system catalyzes the degradation of glycine. The P protein binds the alpha-amino group of glycine through its pyridoxal phosphate cofactor; CO(2) is released and the remaining methylamine moiety is then transferred to the lipoamide cofactor of the H protein. This is Glycine dehydrogenase (decarboxylating) from Serratia proteamaculans (strain 568).